We begin with the raw amino-acid sequence, 188 residues long: MDVNIAPLRAWDDFFPGSDRFARPDFRDISKWNNRVVSNLLYYQTNYLVVAAMMISVVGFLSPFNMILGGIVVVLVFTGFVWAAHNKDILRRLKKQYPTVFVMVVMLASYFLISMFGGVMVFVFGITFPLLLMFIHASLRLRNLKNKLENKIEGIGLKRTPMGIVLDALEQQEENISKFADYISKVNE.

Met1 bears the N-acetylmethionine mark. The Cytoplasmic segment spans residues 1–35 (MDVNIAPLRAWDDFFPGSDRFARPDFRDISKWNNR). 2 consecutive transmembrane segments (helical) span residues 36–56 (VVSN…MMIS) and 57–77 (VVGF…VLVF). At 78–93 (TGFVWAAHNKDILRRL) the chain is on the cytoplasmic side. 2 helical membrane-spanning segments follow: residues 94–114 (KKQY…FLIS) and 115–135 (MFGG…LMFI). Residues 103–117 (MVVMLASYFLISMFG) are required for homodimer formation and heterodimer formation with ARL6IP1. The Cytoplasmic portion of the chain corresponds to 136 to 188 (HASLRLRNLKNKLENKIEGIGLKRTPMGIVLDALEQQEENISKFADYISKVNE). A targeting to endoplasmic reticulum membrane region spans residues 136-188 (HASLRLRNLKNKLENKIEGIGLKRTPMGIVLDALEQQEENISKFADYISKVNE).

The protein belongs to the PRA1 family. In terms of assembly, homodimer. Heterodimer with ARL6IP1. Forms multimers. Interacts with ARL6. Interacts with prenylated RAB1A and RAB3A. Interacts with SLC1A1/EAAC1. Interacts with RTN2 (via first transmembrane domain). Does not interact with VAMP1, VAMP2 or VAMP3.

The protein localises to the endoplasmic reticulum membrane. Its subcellular location is the cell membrane. It is found in the cytoplasm. It localises to the cytoskeleton. In terms of biological role, regulates intracellular concentrations of taurine and glutamate. Negatively modulates SLC1A1/EAAC1 glutamate transport activity by decreasing its affinity for glutamate in a PKC activity-dependent manner. Plays a role in the retention of SLC1A1/EAAC1 in the endoplasmic reticulum. The sequence is that of PRA1 family protein 3 (ARL6IP5) from Sus scrofa (Pig).